Here is a 308-residue protein sequence, read N- to C-terminus: MTNNNSNSNNNQTISNLSAGLKSVNLADQQQNEVNLNLLQQQLQNEATTQQSQSRISQFFQNQPTEGYTLFSHRSAPNGFKVAIILSELNLPFNTIFLDFNNGEQRAPEFVTINPNARVPALIDHFNENTSIWESGAIILYLVSKYLKDNGECALWSDNLIEQSQISSWLFFQTSGHAPMIGQALHFRYFHSCPVPSAVERYTDEVRRVYGVIEMALAERREALIMDLDVENAAAYSAGTTPLSQSRYFDYPVWLVGDRATVADLSFVPWNNVVDRIGINLKVEFPEVYKWTKYMMRRPAVIRALRGD.

Residues 66 to 150 enclose the GST N-terminal domain; the sequence is EGYTLFSHRS…YLVSKYLKDN (85 aa). Positions 159–308 constitute a GST C-terminal domain; sequence NLIEQSQISS…PAVIRALRGD (150 aa).

It belongs to the GST superfamily. Homodimer.

Functionally, plays an important role in the cellular response to the nitrogen source. URE2 gene plays a major part in the repression of GLN1 and GDH2 genes by glutamine, and is required for the inactivation of glutamine synthetase. URE2 gene product may catalytically inactivate GLN3 in response to an increase in the intracellular concentration of glutamine. This chain is Protein URE2 (URE2), found in Debaryomyces hansenii (strain ATCC 36239 / CBS 767 / BCRC 21394 / JCM 1990 / NBRC 0083 / IGC 2968) (Yeast).